A 300-amino-acid chain; its full sequence is Probable mitochondrial 2-oxodicarboxylate carrier (300 aa).

Residues 1–20 (MTSKGNAGNPPTPTPAPVKS) form a disordered region. 3 Solcar repeats span residues 21–104 (QPLW…YEKQ), 114–200 (PTQM…IKSA), and 209–295 (GVLV…VMKL). Transmembrane regions (helical) follow at residues 27–47 (LVSGGIAGVSEILVMYPLDVV), 74–93 (LKMYRGIVPPILVEAPKRAI), 120–140 (IGSGVLAGITEAFIVVPFELV), 171–191 (GFFKGLESTIWRHACWNGGYF), 209–229 (GVLVNNFIAGGLAGTFGTMLN), and 278–298 (LGPGGGILLVVNEFVMKLLAG).

It belongs to the mitochondrial carrier (TC 2.A.29) family.

The protein localises to the mitochondrion inner membrane. The catalysed reaction is 2-oxoadipate(in) + 2-oxoglutarate(out) = 2-oxoadipate(out) + 2-oxoglutarate(in). It carries out the reaction hexanedioate(in) + 2-oxoglutarate(out) = hexanedioate(out) + 2-oxoglutarate(in). The enzyme catalyses L-2-aminoadipate(in) + 2-oxoglutarate(out) = L-2-aminoadipate(out) + 2-oxoglutarate(in). It catalyses the reaction glutarate(in) + 2-oxoglutarate(out) = glutarate(out) + 2-oxoglutarate(in). The catalysed reaction is 2-oxoheptanedioate(in) + 2-oxoglutarate(out) = 2-oxoheptanedioate(out) + 2-oxoglutarate(in). It carries out the reaction heptanedioate(in) + 2-oxoglutarate(out) = heptanedioate(out) + 2-oxoglutarate(in). The enzyme catalyses citrate(in) + 2-oxoglutarate(out) = citrate(out) + 2-oxoglutarate(in). Transports dicarboxylates across the inner membranes of mitochondria by a counter-exchange mechanism. Can transport 2-oxoadipate (2-oxohexanedioate), 2-oxoglutarate, adipate (hexanedioate), glutarate, and to a lesser extent, pimelate (heptanedioate), 2-oxopimelate (2-oxoheptanedioate), 2-aminoadipate (2-aminohexanedioate), oxaloacetate, and citrate. Plays a central role in catabolism of lysine, hydroxylysine, and tryptophan, by transporting common metabolite intermediates (such as 2-oxoadipate) into the mitochondria, where it is converted into acetyl-CoA and can enter the citric acid (TCA) cycle. The sequence is that of Probable mitochondrial 2-oxodicarboxylate carrier (mcfT) from Dictyostelium discoideum (Social amoeba).